The chain runs to 189 residues: ATP synthase subunit delta (189 aa).

The protein belongs to the ATPase delta chain family. As to quaternary structure, F-type ATPases have 2 components, F(1) - the catalytic core - and F(0) - the membrane proton channel. F(1) has five subunits: alpha(3), beta(3), gamma(1), delta(1), epsilon(1). F(0) has three main subunits: a(1), b(2) and c(10-14). The alpha and beta chains form an alternating ring which encloses part of the gamma chain. F(1) is attached to F(0) by a central stalk formed by the gamma and epsilon chains, while a peripheral stalk is formed by the delta and b chains.

The protein resides in the cell inner membrane. Its function is as follows. F(1)F(0) ATP synthase produces ATP from ADP in the presence of a proton or sodium gradient. F-type ATPases consist of two structural domains, F(1) containing the extramembraneous catalytic core and F(0) containing the membrane proton channel, linked together by a central stalk and a peripheral stalk. During catalysis, ATP synthesis in the catalytic domain of F(1) is coupled via a rotary mechanism of the central stalk subunits to proton translocation. Functionally, this protein is part of the stalk that links CF(0) to CF(1). It either transmits conformational changes from CF(0) to CF(1) or is implicated in proton conduction. In Rickettsia bellii (strain OSU 85-389), this protein is ATP synthase subunit delta.